Reading from the N-terminus, the 60-residue chain is GFGCPNNYQCHRHCKSIPGRCGGYCGGWHRLRCTCYRCGGRREDVEDIFDIFDNEAADRF.

Intrachain disulfides connect C4/C25, C10/C33, C14/C35, and C21/C38. A 3-hydroxytryptophan modification is found at W28. C38 carries the post-translational modification Cysteine amide. The propeptide occupies 39-60 (GGRREDVEDIFDIFDNEAADRF).

It belongs to the invertebrate defensin family. Type 2 subfamily. Post-translationally, the hydroxylation of the Trp-28 is not important for the antibacterial activity. Abundantly expressed in hemocytes.

Its subcellular location is the secreted. In terms of biological role, active against both Gram-positive and Gram-negative bacteria but is not cytotoxic towards human erythrocytes or protozoa. This Mytilus galloprovincialis (Mediterranean mussel) protein is Defensin MGD-1 (FH3).